The primary structure comprises 702 residues: Elongation factor G (702 aa).

The region spanning 9 to 292 (DRTRNIGIMA…AVVDYLPSPL (284 aa)) is the tr-type G domain. GTP contacts are provided by residues 18-25 (AHIDAGKT), 91-95 (DTPGH), and 145-148 (NKMD).

It belongs to the TRAFAC class translation factor GTPase superfamily. Classic translation factor GTPase family. EF-G/EF-2 subfamily.

Its subcellular location is the cytoplasm. In terms of biological role, catalyzes the GTP-dependent ribosomal translocation step during translation elongation. During this step, the ribosome changes from the pre-translocational (PRE) to the post-translocational (POST) state as the newly formed A-site-bound peptidyl-tRNA and P-site-bound deacylated tRNA move to the P and E sites, respectively. Catalyzes the coordinated movement of the two tRNA molecules, the mRNA and conformational changes in the ribosome. The protein is Elongation factor G of Oenococcus oeni (strain ATCC BAA-331 / PSU-1).